Reading from the N-terminus, the 198-residue chain is MICOS complex subunit Mic26 (198 aa).

Positions 1 to 23 are cleaved as a signal peptide; it reads MFKVIQRSVGPASLSLLTFRVYA. Asn-63 is a glycosylation site (N-linked (GlcNAc...) asparagine). A helical transmembrane segment spans residues 108 to 128; it reads PGFFPRLGVIGFAGFVGLLFA.

The protein belongs to the apolipoprotein O/MICOS complex subunit Mic27 family. In terms of assembly, component of the mitochondrial contact site and cristae organizing system (MICOS) complex, composed of at least MICOS10/MIC10, CHCHD3/MIC19, CHCHD6/MIC25, APOOL/MIC27, IMMT/MIC60, APOO/MIC23/MIC26 and MICOS13/MIC13. This complex was also known under the names MINOS or MitOS complex. The MICOS complex associates with mitochondrial outer membrane proteins SAMM50, MTX1 and MTX2 (together described as components of the mitochondrial outer membrane sorting assembly machinery (SAM) complex) and DNAJC11, mitochondrial inner membrane protein TMEM11 and with HSPA9. The MICOS and SAM complexes together with DNAJC11 are part of a large protein complex spanning both membranes termed the mitochondrial intermembrane space bridging (MIB) complex. Interacts with IMMT/MIC60. Interacts with MICOS10/MIC10 and APOOL/MIC27.

It is found in the mitochondrion inner membrane. The protein resides in the mitochondrion. It localises to the endoplasmic reticulum membrane. Its subcellular location is the golgi apparatus membrane. Component of the MICOS complex, a large protein complex of the mitochondrial inner membrane that plays crucial roles in the maintenance of crista junctions, inner membrane architecture, and formation of contact sites to the outer membrane. Plays a crucial role in crista junction formation and mitochondrial function. Can induce cardiac lipotoxicity by enhancing mitochondrial respiration and fatty acid metabolism in cardiac myoblasts. Promotes cholesterol efflux from macrophage cells. Detected in HDL, LDL and VLDL. Secreted by a microsomal triglyceride transfer protein (MTTP)-dependent mechanism, probably as a VLDL-associated protein that is subsequently transferred to HDL. This Mus musculus (Mouse) protein is MICOS complex subunit Mic26 (Apoo).